Here is a 297-residue protein sequence, read N- to C-terminus: Putative peptidyl-prolyl cis-trans isomerase YacD (297 aa).

A signal peptide spans 1-32 (MKSRTIWTIILGALLVCCIAVAYTLTKSQAGA). Residues 154 to 247 (DDSYRIRHIV…NGYAIIQLKE (94 aa)) enclose the PpiC domain.

The catalysed reaction is [protein]-peptidylproline (omega=180) = [protein]-peptidylproline (omega=0). This Bacillus subtilis (strain 168) protein is Putative peptidyl-prolyl cis-trans isomerase YacD (yacD).